Reading from the N-terminus, the 1164-residue chain is Nuclear exosome regulator NRDE2 (1164 aa).

2 disordered regions span residues 1-25 (MALF…ELDW) and 39-149 (LSQQ…GHRF). Ala-2 bears the N-acetylalanine mark. Basic and acidic residues predominate over residues 61–73 (LKSESSDESDTNK). The stretch at 61–383 (LKSESSDESD…IESNQSSVDL (323 aa)) forms a coiled coil. A compositionally biased stretch (basic residues) spans 74–103 (KLKQTSRKKKKEKKKKRKHQHHKKTKRKHG). Positions 110-133 (SETDTDSEKDKPSRGVGGSKKESE) are enriched in basic and acidic residues. An MID/MTR4-interacting domain region spans residues 163–266 (FRTDKKPDPA…KDLEDAAPVT (104 aa)). The segment at 279–305 (TTHWLQGQGPPEQESKQPDAQPDSESA) is disordered. 5 HAT repeats span residues 305–337 (AALK…FQDE), 395–427 (WEPS…FCQS), 758–792 (SQGK…LEWL), 978–1010 (YPLA…IQNK), and 1067–1101 (GLMH…FLVS).

It belongs to the NRDE2 family. Interacts with MTREX; the interaction is direct and stabilizes NRDE2. Interacts with EXOSC10, EFTUD2 and EIF4A3.

The protein resides in the nucleus speckle. It localises to the nucleus. It is found in the nucleolus. Its subcellular location is the nucleoplasm. Protein of the nuclear speckles that regulates RNA degradation and export from the nucleus through its interaction with MTREX an essential factor directing various RNAs to exosomal degradation. Changes the conformation of MTREX, precluding its association with the nuclear exosome and interaction with proteins required for its function in RNA exosomal degradation. Negatively regulates, for instance, the degradation of mRNAs and lncRNAs by inhibiting their MTREX-mediated recruitment to nuclear exosome. By preventing the degradation of RNAs in the nucleus, it promotes their export to the cytoplasm. U5 snRNP-associated RNA splicing factor which is required for efficient splicing of CEP131 pre-mRNA and plays an important role in centrosome maturation, integrity and function during mitosis. Suppresses intron retention in a subset of pre-mRNAs containing short, GC-rich introns with relatively weak 5' and 3' splice sites. Plays a role in DNA damage response. This chain is Nuclear exosome regulator NRDE2, found in Homo sapiens (Human).